Reading from the N-terminus, the 931-residue chain is DNA mismatch repair protein MutS (931 aa).

The segment covering 1–10 (MMDDTAMPAR) has biased composition (low complexity). The disordered stretch occupies residues 1 to 34 (MMDDTAMPARAEADAAEDELAAPAGIDRTAKADK). Residue 674-681 (GPNMAGKS) participates in ATP binding.

This sequence belongs to the DNA mismatch repair MutS family.

Functionally, this protein is involved in the repair of mismatches in DNA. It is possible that it carries out the mismatch recognition step. This protein has a weak ATPase activity. The protein is DNA mismatch repair protein MutS of Azorhizobium caulinodans (strain ATCC 43989 / DSM 5975 / JCM 20966 / LMG 6465 / NBRC 14845 / NCIMB 13405 / ORS 571).